We begin with the raw amino-acid sequence, 111 residues long: Iron-sulfur cluster insertion protein ErpA (111 aa).

Positions 39, 103, and 105 each coordinate iron-sulfur cluster.

This sequence belongs to the HesB/IscA family. Homodimer. The cofactor is iron-sulfur cluster.

Its function is as follows. Required for insertion of 4Fe-4S clusters for at least IspG. The protein is Iron-sulfur cluster insertion protein ErpA of Acinetobacter baumannii (strain SDF).